We begin with the raw amino-acid sequence, 303 residues long: MKNLLSMEALTVHEIEHLLEQAAQFKHGKKATFKEQTFAVNMFFEPSTRTHTSFEVAEKKLGVEVISFDASSSSMTKGETLYDTLLTMQAVGVNVAVIRHSDENYYAGLENLDIAIVNGGDGCGEHPSQSLLDLFTIKEQFGTFQGLKIAIVGDIRHSRVANSNMKVLKRLGAELFFSGPREWFDDSYLAYGTYLSIDEMVEKVDVMMLLRVQHERHSGTERFTKASYHEKFGLTEERAMKLKEDAIIMHPSPVNRDVEIADSLVESEKSRIVTQMTNGVFIRMAILEVILKEKSRRAKVCTY.

Carbamoyl phosphate is bound by residues R49 and T50. Residue K77 participates in L-aspartate binding. The carbamoyl phosphate site is built by R99, H126, and Q129. Positions 159 and 211 each coordinate L-aspartate. Residues S252 and P253 each coordinate carbamoyl phosphate.

It belongs to the aspartate/ornithine carbamoyltransferase superfamily. ATCase family. As to quaternary structure, heterododecamer (2C3:3R2) of six catalytic PyrB chains organized as two trimers (C3), and six regulatory PyrI chains organized as three dimers (R2).

The enzyme catalyses carbamoyl phosphate + L-aspartate = N-carbamoyl-L-aspartate + phosphate + H(+). Its pathway is pyrimidine metabolism; UMP biosynthesis via de novo pathway; (S)-dihydroorotate from bicarbonate: step 2/3. Functionally, catalyzes the condensation of carbamoyl phosphate and aspartate to form carbamoyl aspartate and inorganic phosphate, the committed step in the de novo pyrimidine nucleotide biosynthesis pathway. This chain is Aspartate carbamoyltransferase catalytic subunit, found in Listeria welshimeri serovar 6b (strain ATCC 35897 / DSM 20650 / CCUG 15529 / CIP 8149 / NCTC 11857 / SLCC 5334 / V8).